The following is a 430-amino-acid chain: GTPase Obg (430 aa).

An Obg domain is found at 1–158 (MFIDTAKVFV…LNIVLELKLL (158 aa)). Residues 159–331 (ADVGLLGFPN…VMKEAARILK (173 aa)) form the OBG-type G domain. GTP-binding positions include 165-172 (GFPNVGKS), 190-194 (FTTLK), 212-215 (DIPG), 282-285 (NKSD), and 312-314 (SAA). Residues serine 172 and threonine 192 each coordinate Mg(2+). In terms of domain architecture, OCT spans 345-430 (MYIPEEKRFT…LNDFEFEYIL (86 aa)).

This sequence belongs to the TRAFAC class OBG-HflX-like GTPase superfamily. OBG GTPase family. As to quaternary structure, monomer. Mg(2+) serves as cofactor.

Its subcellular location is the cytoplasm. In terms of biological role, an essential GTPase which binds GTP, GDP and possibly (p)ppGpp with moderate affinity, with high nucleotide exchange rates and a fairly low GTP hydrolysis rate. Plays a role in control of the cell cycle, stress response, ribosome biogenesis and in those bacteria that undergo differentiation, in morphogenesis control. This chain is GTPase Obg, found in Clostridium beijerinckii (strain ATCC 51743 / NCIMB 8052) (Clostridium acetobutylicum).